Here is a 333-residue protein sequence, read N- to C-terminus: Adenosine deaminase (333 aa).

Zn(2+) contacts are provided by His12 and His14. The substrate site is built by His14, Asp16, and Gly170. His197 contacts Zn(2+). Catalysis depends on Glu200, which acts as the Proton donor. Residue Asp278 coordinates Zn(2+). Asp279 is a binding site for substrate.

Belongs to the metallo-dependent hydrolases superfamily. Adenosine and AMP deaminases family. Adenosine deaminase subfamily. Zn(2+) serves as cofactor.

It carries out the reaction adenosine + H2O + H(+) = inosine + NH4(+). The catalysed reaction is 2'-deoxyadenosine + H2O + H(+) = 2'-deoxyinosine + NH4(+). In terms of biological role, catalyzes the hydrolytic deamination of adenosine and 2-deoxyadenosine. This chain is Adenosine deaminase, found in Shigella boydii serotype 4 (strain Sb227).